A 780-amino-acid chain; its full sequence is Kazrin (780 aa).

Residues 79 to 261 are a coiled coil; the sequence is AQVLLREEVV…LATLTKDVPK (183 aa). A disordered region spans residues 295–430; that stretch reads QQTLYHSHPP…TRHSLSLSEG (136 aa). 3 positions are modified to phosphoserine: Ser357, Ser372, and Ser392. Positions 416 to 427 are enriched in polar residues; it reads SQCSPTRHSLSL. 3 SAM domains span residues 451–516, 529–593, and 617–684; these read WKAG…YRDA, DHHW…LYQV, and WTNQ…STVF. The interval 692–780 is disordered; that stretch reads IRESERFGTP…EYSSLEVTNV (89 aa). Basic and acidic residues predominate over residues 760 to 771; the sequence is LQGRPEQCRLEE.

The protein belongs to the kazrin family.

It localises to the cell junction. Its subcellular location is the nucleus. The protein resides in the cytoplasm. It is found in the cytoskeleton. In terms of biological role, component of the cornified envelope of keratinocytes. May be involved in the interplay between adherens junctions and desmosomes. The function in the nucleus is not known. In Rattus norvegicus (Rat), this protein is Kazrin (Kazn).